The sequence spans 373 residues: Anhydro-N-acetylmuramic acid kinase (373 aa).

Residue 12–19 (GTSLDGVD) coordinates ATP.

It belongs to the anhydro-N-acetylmuramic acid kinase family.

It carries out the reaction 1,6-anhydro-N-acetyl-beta-muramate + ATP + H2O = N-acetyl-D-muramate 6-phosphate + ADP + H(+). Its pathway is amino-sugar metabolism; 1,6-anhydro-N-acetylmuramate degradation. The protein operates within cell wall biogenesis; peptidoglycan recycling. In terms of biological role, catalyzes the specific phosphorylation of 1,6-anhydro-N-acetylmuramic acid (anhMurNAc) with the simultaneous cleavage of the 1,6-anhydro ring, generating MurNAc-6-P. Is required for the utilization of anhMurNAc either imported from the medium or derived from its own cell wall murein, and thus plays a role in cell wall recycling. The polypeptide is Anhydro-N-acetylmuramic acid kinase (Serratia proteamaculans (strain 568)).